We begin with the raw amino-acid sequence, 334 residues long: Adenine deaminase (334 aa).

Residues His-17, His-19, and His-197 each contribute to the Zn(2+) site. The Proton donor role is filled by Glu-200. Asp-278 provides a ligand contact to Zn(2+). Asp-279 is a substrate binding site.

It belongs to the metallo-dependent hydrolases superfamily. Adenosine and AMP deaminases family. Adenine deaminase type 2 subfamily. The cofactor is Zn(2+).

It catalyses the reaction adenine + H2O + H(+) = hypoxanthine + NH4(+). Its function is as follows. Catalyzes the hydrolytic deamination of adenine to hypoxanthine. Plays an important role in the purine salvage pathway and in nitrogen catabolism. The chain is Adenine deaminase from Rhodospirillum rubrum (strain ATCC 11170 / ATH 1.1.1 / DSM 467 / LMG 4362 / NCIMB 8255 / S1).